The sequence spans 149 residues: Transcriptional repressor NrdR (149 aa).

Residues Cys-3–Cys-34 fold into a zinc finger. An ATP-cone domain is found at Pro-49 to Glu-139.

The protein belongs to the NrdR family. Zn(2+) serves as cofactor.

Its function is as follows. Negatively regulates transcription of bacterial ribonucleotide reductase nrd genes and operons by binding to NrdR-boxes. This Shewanella pealeana (strain ATCC 700345 / ANG-SQ1) protein is Transcriptional repressor NrdR.